Consider the following 251-residue polypeptide: Uroporphyrinogen-III synthase (251 aa).

Residues 231–251 form a disordered region; sequence PAPNPESLASSIVAFDEENSS.

Belongs to the uroporphyrinogen-III synthase family.

The enzyme catalyses hydroxymethylbilane = uroporphyrinogen III + H2O. Its pathway is porphyrin-containing compound metabolism; protoporphyrin-IX biosynthesis; coproporphyrinogen-III from 5-aminolevulinate: step 3/4. Its function is as follows. Catalyzes cyclization of the linear tetrapyrrole, hydroxymethylbilane, to the macrocyclic uroporphyrinogen III. The sequence is that of Uroporphyrinogen-III synthase (ups1) from Schizosaccharomyces pombe (strain 972 / ATCC 24843) (Fission yeast).